The following is a 79-amino-acid chain: Succinate dehydrogenase assembly factor 1, mitochondrial (79 aa).

Belongs to the complex I LYR family. SDHAF1 subfamily. As to quaternary structure, interacts with sdh2 within an sdh1-sdh2 subcomplex.

It is found in the mitochondrion matrix. Functionally, plays an essential role in the assembly of succinate dehydrogenase (SDH), an enzyme complex (also referred to as respiratory complex II) that is a component of both the tricarboxylic acid (TCA) cycle and the mitochondrial electron transport chain, and which couples the oxidation of succinate to fumarate with the reduction of ubiquinone (coenzyme Q) to ubiquinol. Promotes maturation of the iron-sulfur protein subunit sdh2 of the SDH catalytic dimer, protecting it from the deleterious effects of oxidants. May act together with SDHAF3. The chain is Succinate dehydrogenase assembly factor 1, mitochondrial from Schizosaccharomyces pombe (strain 972 / ATCC 24843) (Fission yeast).